Consider the following 527-residue polypeptide: Phosphoethanolamine transferase OpgE (527 aa).

Over 1–33 the chain is Periplasmic; that stretch reads MNLTLKESLVTRSRVFSPWTAFYFLQSLLINLG. A helical membrane pass occupies residues 34-54; sequence LGYPFSLLYTAAFTAILLLLW. The Cytoplasmic segment spans residues 55–62; it reads RTLPRVQK. Residues 63–83 form a helical membrane-spanning segment; that stretch reads VLVGVSSLVAACYFPFAQAYG. The Periplasmic segment spans residues 84-106; it reads APNFNTLLALHSTNMEESTEILT. Residues 107-127 traverse the membrane as a helical segment; that stretch reads IFPWYSYLVGLFIFALGVIAI. Topologically, residues 128-146 are cytoplasmic; the sequence is RRKKENEKARWNTFDSLCL. A helical transmembrane segment spans residues 147 to 167; sequence VFSVATFFVAPVQNLAWGGVF. At 168-527 the chain is on the periplasmic side; it reads KLKDTGYPVF…LGTDIFDPKP (360 aa).

This sequence belongs to the phosphoethanolamine transferase family.

It localises to the cell inner membrane. Its pathway is glycan metabolism; osmoregulated periplasmic glucan (OPG) biosynthesis. In terms of biological role, catalyzes the addition of a phosphoethanolamine moiety to the osmoregulated periplasmic glucan (OPG) backbone. The sequence is that of Phosphoethanolamine transferase OpgE (opgE) from Escherichia coli (strain K12).